The primary structure comprises 227 residues: Homeobox-leucine zipper protein ATHB-54 (227 aa).

Positions 65-124 form a DNA-binding region, homeobox; that stretch reads EITKKRKLTPIQLRLLEESFEEEKRLEPDRKLWLAEKLGLQPSQVAVWFQNRRARYKTKQ. A leucine-zipper region spans residues 125 to 153; it reads LEHDCDSLKASYAKLKTDWDILFVQNQTL. Residues 175 to 198 form a disordered region; that stretch reads IERKRLGEEGSSVKSDNTQYSEEE.

Belongs to the HD-ZIP homeobox family. Class I subfamily. Predominantly expressed in flowers and siliques.

It localises to the nucleus. Its function is as follows. Probable transcription factor. The sequence is that of Homeobox-leucine zipper protein ATHB-54 (ATHB-54) from Arabidopsis thaliana (Mouse-ear cress).